The sequence spans 381 residues: rRNA adenine N-6-methyltransferase (381 aa).

Over residues 1–19 (MSSSDEQPRPRRRNQDRQH) the composition is skewed to basic and acidic residues. A disordered region spans residues 1-42 (MSSSDEQPRPRRRNQDRQHPNQNRPVLGRTERDRNRRQFGQN). Asn42, Leu44, Gly69, Glu90, Asp115, and Ala131 together coordinate S-adenosyl-L-methionine. A disordered region spans residues 282 to 381 (RLDQKNEPRG…PGRRGGPGQR (100 aa)). Over residues 301–358 (GGRDHGDRRTGGQDRGDRRTGGRDHRDRQASGHGDRRSSGRNRDDGRTGEREQGDQGG) the composition is skewed to basic and acidic residues. Residues 359–381 (RRGPSGGGRTGGRPGRRGGPGQR) are compositionally biased toward gly residues.

This sequence belongs to the class I-like SAM-binding methyltransferase superfamily. rRNA adenine N(6)-methyltransferase family.

The enzyme catalyses adenosine(2085) in 23S rRNA + 2 S-adenosyl-L-methionine = N(6)-dimethyladenosine(2085) in 23S rRNA + 2 S-adenosyl-L-homocysteine + 2 H(+). In terms of biological role, this protein produces a dimethylation of the adenine residue at position 2085 in 23S rRNA, resulting in reduced affinity between ribosomes and macrolide-lincosamide-streptogramin B antibiotics. This chain is rRNA adenine N-6-methyltransferase (ermE), found in Saccharopolyspora erythraea (strain ATCC 11635 / DSM 40517 / JCM 4748 / NBRC 13426 / NCIMB 8594 / NRRL 2338).